The sequence spans 455 residues: Homeobox protein 14 (455 aa).

5 stretches are compositionally biased toward low complexity: residues 1-16 (MNHN…KNNS), 24-39 (SSRS…SSSG), 81-118 (TTTT…ESPN), 179-239 (ESPN…SPSF), and 263-294 (NNNN…TNNN). Disordered stretches follow at residues 1–53 (MNHN…SSIN), 67–121 (KQTK…NCNK), 178–239 (SESP…SPSF), and 258–296 (TLLS…NNGD). 2 DNA-binding regions (homeobox) span residues 310 to 369 (KSGQ…SKSG) and 372 to 431 (SYAK…NKLS). The interval 431–455 (SSKANQDNDNNNNNENNDDSYSDEG) is disordered. Positions 435 to 445 (NQDNDNNNNNE) are enriched in low complexity. The segment covering 446–455 (NNDDSYSDEG) has biased composition (acidic residues).

The protein resides in the nucleus. In terms of biological role, putative transcription factor. This chain is Homeobox protein 14 (hbx14), found in Dictyostelium discoideum (Social amoeba).